A 491-amino-acid polypeptide reads, in one-letter code: Monothiol glutaredoxin-S11 (491 aa).

3 Glutaredoxin domains span residues 151–253 (NKRL…NIPL), 287–389 (KERL…GIVA), and 394–491 (EDRL…TLSE). Lys-411 serves as a coordination point for glutathione. Cys-419 contributes to the [2Fe-2S] cluster binding site. Glutathione-binding positions include Arg-448, Phe-460, and 473-474 (CD).

Belongs to the glutaredoxin family. CGFS subfamily.

The protein localises to the cytoplasm. May only reduce GSH-thiol disulfides, but not protein disulfides. This Oryza sativa subsp. japonica (Rice) protein is Monothiol glutaredoxin-S11 (GRXS11).